Consider the following 126-residue polypeptide: Small ribosomal subunit protein uS13 (126 aa).

Residues 95 to 126 (GLPVRGQRTQTNARTRKGKKKTVAGKKKAGRK) form a disordered region. Positions 108 to 126 (RTRKGKKKTVAGKKKAGRK) are enriched in basic residues.

It belongs to the universal ribosomal protein uS13 family. As to quaternary structure, part of the 30S ribosomal subunit. Forms a loose heterodimer with protein S19. Forms two bridges to the 50S subunit in the 70S ribosome.

In terms of biological role, located at the top of the head of the 30S subunit, it contacts several helices of the 16S rRNA. In the 70S ribosome it contacts the 23S rRNA (bridge B1a) and protein L5 of the 50S subunit (bridge B1b), connecting the 2 subunits; these bridges are implicated in subunit movement. Contacts the tRNAs in the A and P-sites. The protein is Small ribosomal subunit protein uS13 of Thermobifida fusca (strain YX).